The sequence spans 645 residues: Rho GTPase-activating protein 25 (645 aa).

The 106-residue stretch at 46–151 (RPIKMGWLKK…WVKFLRRVAG (106 aa)) folds into the PH domain. Residues 159–353 (QRLDETVAYE…MMIRDHEVLF (195 aa)) enclose the Rho-GAP domain. 2 disordered regions span residues 355–444 (KSKD…QTLP) and 469–550 (FWSP…EEEI). A phosphoserine mark is found at Ser362 and Ser395. Low complexity predominate over residues 393 to 409 (TDSFSSMTSDSDTTSPT). Phosphothreonine is present on Thr406. Over residues 420-431 (DSSKVPREKPGD) the composition is skewed to basic and acidic residues. Residues 487 to 504 (SQDLRQLSDSQRTSTYDN) show a composition bias toward polar residues. Ser536 is subject to Phosphoserine. The stretch at 541-644 (GKKNSGEEEI…VKSMKEPKTE (104 aa)) forms a coiled coil.

Functionally, GTPase activator for the Rho-type GTPases by converting them to an inactive GDP-bound state. The protein is Rho GTPase-activating protein 25 (ARHGAP25) of Homo sapiens (Human).